The primary structure comprises 248 residues: tRNA (guanine-N(1)-)-methyltransferase (248 aa).

S-adenosyl-L-methionine is bound by residues G113 and 133–138 (IGDYVL).

This sequence belongs to the RNA methyltransferase TrmD family. Homodimer.

It localises to the cytoplasm. It catalyses the reaction guanosine(37) in tRNA + S-adenosyl-L-methionine = N(1)-methylguanosine(37) in tRNA + S-adenosyl-L-homocysteine + H(+). Functionally, specifically methylates guanosine-37 in various tRNAs. In Shewanella denitrificans (strain OS217 / ATCC BAA-1090 / DSM 15013), this protein is tRNA (guanine-N(1)-)-methyltransferase.